The primary structure comprises 366 residues: Structure-specific endonuclease subunit SLX1 (366 aa).

The GIY-YIG domain occupies 14-95 (AFYCCYLLRS…QNTHATRHID (82 aa)). 2 disordered regions span residues 31–59 (IGST…SMQG) and 102–124 (RAEE…KRPP). A compositionally biased stretch (basic residues) spans 109–123 (GKKKATSPGRRRKRP). An SLX1-type zinc finger spans residues 234 to 289 (CGVCKNPADMSSSLILVCPIEACQTVSHLSCLSNKFLTEGGELETLVPLEGTCPGC). The interval 317 to 366 (KPKRKRKSDNPAESDAADGQALEQEDEELDETWMEDMSQDEEPSPVKKSR) is disordered. The span at 339-359 (EQEDEELDETWMEDMSQDEEP) shows a compositional bias: acidic residues.

It belongs to the SLX1 family. As to quaternary structure, forms a heterodimer with SLX4. It depends on a divalent metal cation as a cofactor.

Its subcellular location is the nucleus. Catalytic subunit of the SLX1-SLX4 structure-specific endonuclease that resolves DNA secondary structures generated during DNA repair and recombination. Has endonuclease activity towards branched DNA substrates, introducing single-strand cuts in duplex DNA close to junctions with ss-DNA. This is Structure-specific endonuclease subunit SLX1 from Phaeosphaeria nodorum (strain SN15 / ATCC MYA-4574 / FGSC 10173) (Glume blotch fungus).